The primary structure comprises 433 residues: Probable exopolygalacturonase X (433 aa).

Residues 1–21 (MKLTQATTLLLSLGLSLPVEG) form the signal peptide. Residues 30 to 54 (VGPKPPFRPLPASTPRNKTCQVQSN) form a disordered region. Residues 43–54 (TPRNKTCQVQSN) show a composition bias toward polar residues. Residues Asn-46, Asn-127, and Asn-197 are each glycosylated (N-linked (GlcNAc...) asparagine). The PbH1 1 repeat unit spans residues 229 to 250 (SSNIVIQNSVINNGDDCVSFKP). Asp-243 (proton donor) is an active-site residue. A disulfide bridge links Cys-245 with Cys-262. Residues Asn-251 and Asn-263 are each glycosylated (N-linked (GlcNAc...) asparagine). The PbH1 2 repeat unit spans residues 252–272 (STEILVQNLHCNGSHGISVGS). His-266 is an active-site residue. N-linked (GlcNAc...) asparagine glycans are attached at residues Asn-290, Asn-295, Asn-327, Asn-352, and Asn-362. The PbH1 3 repeat unit spans residues 325-346 (VQNITYDKMYIENVDWAIEVTQ). The stretch at 360 to 403 (PSNLTISDVYFNDLTGVTSGKNDPNVGTIICSSPDVCSGIHATN) is one PbH1 4 repeat. A disulfide bridge links Cys-390 with Cys-396.

It belongs to the glycosyl hydrolase 28 family.

The protein localises to the secreted. It catalyses the reaction [(1-&gt;4)-alpha-D-galacturonosyl](n) + H2O = alpha-D-galacturonate + [(1-&gt;4)-alpha-D-galacturonosyl](n-1). In terms of biological role, specific in hydrolyzing the terminal glycosidic bond of polygalacturonic acid and oligogalacturonates. The polypeptide is Probable exopolygalacturonase X (pgaX) (Aspergillus flavus (strain ATCC 200026 / FGSC A1120 / IAM 13836 / NRRL 3357 / JCM 12722 / SRRC 167)).